A 103-amino-acid polypeptide reads, in one-letter code: Small ribosomal subunit protein uS10 (103 aa).

This sequence belongs to the universal ribosomal protein uS10 family. In terms of assembly, part of the 30S ribosomal subunit.

In terms of biological role, involved in the binding of tRNA to the ribosomes. The polypeptide is Small ribosomal subunit protein uS10 (Paraburkholderia xenovorans (strain LB400)).